Here is a 135-residue protein sequence, read N- to C-terminus: MYILNDILNLHRNIILKFNVGRRLRKLVGWSAVRVVLVLIGATIILVVISVLVVSTLAASSSVSSVSPIISTPTTEASRVKSWSGRSLSKGVNVQHFFFLPSHIGISFSRSGDGVEKRRFFIIKLLIRFILLVNS.

A helical transmembrane segment spans residues 35–55 (VVLVLIGATIILVVISVLVVS).

The protein localises to the membrane. This is an uncharacterized protein from Saccharomyces cerevisiae (strain ATCC 204508 / S288c) (Baker's yeast).